Reading from the N-terminus, the 2662-residue chain is Centrosome-associated protein CEP250L1 (2662 aa).

Coiled coils occupy residues 1030-1248 and 1281-1719; these read KVHY…EEEE and ARTH…IDAQ.

It localises to the cytoplasm. Its subcellular location is the cytoskeleton. The protein localises to the microtubule organizing center. It is found in the centrosome. Functionally, part of the centrosome inner core complex. Plays a role in the formation and/or stabilization of the mitotic spindle. Required for proper nuclear segregation and DNA partitioning during cell division. This chain is Centrosome-associated protein CEP250L1, found in Toxoplasma gondii (strain ATCC 50611 / Me49).